The chain runs to 860 residues: Leucine--tRNA ligase (860 aa).

Positions 42 to 52 (PYPSGRLHMGH) match the 'HIGH' region motif. Positions 619–623 (KMSKS) match the 'KMSKS' region motif. K622 contacts ATP.

It belongs to the class-I aminoacyl-tRNA synthetase family.

The protein resides in the cytoplasm. It carries out the reaction tRNA(Leu) + L-leucine + ATP = L-leucyl-tRNA(Leu) + AMP + diphosphate. The sequence is that of Leucine--tRNA ligase from Serratia proteamaculans (strain 568).